The sequence spans 674 residues: DNA ligase (674 aa).

NAD(+)-binding positions include 34–38, 83–84, and E117; these read DFEFD and SL. K119 serves as the catalytic N6-AMP-lysine intermediate. NAD(+) is bound by residues R140, E184, K297, and K321. Zn(2+) contacts are provided by C415, C418, C433, and C439. Positions 598–674 constitute a BRCT domain; sequence LVNTNFEGQS…IDEDEFERML (77 aa).

The protein belongs to the NAD-dependent DNA ligase family. LigA subfamily. Mg(2+) is required as a cofactor. Requires Mn(2+) as cofactor.

It catalyses the reaction NAD(+) + (deoxyribonucleotide)n-3'-hydroxyl + 5'-phospho-(deoxyribonucleotide)m = (deoxyribonucleotide)n+m + AMP + beta-nicotinamide D-nucleotide.. DNA ligase that catalyzes the formation of phosphodiester linkages between 5'-phosphoryl and 3'-hydroxyl groups in double-stranded DNA using NAD as a coenzyme and as the energy source for the reaction. It is essential for DNA replication and repair of damaged DNA. The protein is DNA ligase of Chlorobaculum parvum (strain DSM 263 / NCIMB 8327) (Chlorobium vibrioforme subsp. thiosulfatophilum).